Consider the following 388-residue polypeptide: 1-deoxy-D-xylulose 5-phosphate reductoisomerase (388 aa).

NADPH-binding residues include Thr15, Gly16, Ser17, Ile18, and Asn127. Lys128 is a binding site for 1-deoxy-D-xylulose 5-phosphate. Glu129 contacts NADPH. Residue Asp153 participates in Mn(2+) binding. 1-deoxy-D-xylulose 5-phosphate is bound by residues Ser154, Glu155, Ser179, and His202. Glu155 is a Mn(2+) binding site. Position 208 (Gly208) interacts with NADPH. 4 residues coordinate 1-deoxy-D-xylulose 5-phosphate: Ser215, Asn220, Lys221, and Glu224. Glu224 is a binding site for Mn(2+).

Belongs to the DXR family. Mg(2+) is required as a cofactor. It depends on Mn(2+) as a cofactor.

It carries out the reaction 2-C-methyl-D-erythritol 4-phosphate + NADP(+) = 1-deoxy-D-xylulose 5-phosphate + NADPH + H(+). The protein operates within isoprenoid biosynthesis; isopentenyl diphosphate biosynthesis via DXP pathway; isopentenyl diphosphate from 1-deoxy-D-xylulose 5-phosphate: step 1/6. Catalyzes the NADPH-dependent rearrangement and reduction of 1-deoxy-D-xylulose-5-phosphate (DXP) to 2-C-methyl-D-erythritol 4-phosphate (MEP). This Bacteroides fragilis (strain YCH46) protein is 1-deoxy-D-xylulose 5-phosphate reductoisomerase.